Consider the following 530-residue polypeptide: Rho GTPase-activating protein 36 (530 aa).

The first 19 residues, 1-19 (MPPLLLLSALIFLVNVLGG), serve as a signal peptide directing secretion. The 201-residue stretch at 209–409 (MSLNPIAKQI…AMIDNWDVLF (201 aa)) folds into the Rho-GAP domain. Positions 471–512 (GQSKPFDEGSSEEPAVPPGTARSHDDEEGAGNPLILEQDRPL) are disordered.

In terms of assembly, may interacts (via the Rho-GAP domain) with the active form of RAC1.

Its function is as follows. GTPase activator for the Rho-type GTPases by converting them to an inactive GDP-bound state. The sequence is that of Rho GTPase-activating protein 36 (ARHGAP36) from Bos taurus (Bovine).